A 381-amino-acid polypeptide reads, in one-letter code: MGGLRFGFVDALVHSRLPPTLPARSSMAAATVMGADSYWVGDHLNALVPRSIATSEYLGIAAKFVPKIDANYEPWTMLGNLAFGLPSRLRLGVCVTDAGRRNPAVTAQAAATLHLLTRGRAILGIGVGEREGNEPYGVEWTKPVARFEEALATIRALWNSNGELISRESPYFPLHNALFDLPPYRGKWPEIWVSAHGPRMLRATGRYADAWIPIVVVRPSDYSRALEAVRSAASDAGRDPMSITPAAVRGIITGRNRDDVEEALESVVVKMTALGVPGEAWARHGVEHPMGADFSGVQDIIPQTMDKQTVLSYAAKVPAALMKEVVFSGTPDEVIDQVAEWRDHGLRYVVLINGSLVNPSLRKTVTAVLPHAKVLRGLKKL.

It belongs to the mer family. Phthiodiolone/phenolphthiodiolone dimycocerosates ketoreductase subfamily.

Catalyzes the reduction of the keto moiety of phthiodiolone dimycocerosates (DIM B) and glycosylated phenolphthiodiolone dimycocerosates to form the intermediate compounds phthiotriol and glycosylated phenolphthiotriol dimycocerosates during phthiocerol dimycocerosates (DIM A) and glycosylated phenolphthiocerol dimycocerosates (PGL) biosynthesis. The chain is Phthiodiolone/phenolphthiodiolone dimycocerosates ketoreductase from Mycobacterium tuberculosis (strain CDC 1551 / Oshkosh).